The primary structure comprises 172 residues: S-ribosylhomocysteine lyase (172 aa).

Residues histidine 54, histidine 58, and cysteine 128 each coordinate Fe cation.

Belongs to the LuxS family. Homodimer. Requires Fe cation as cofactor.

It catalyses the reaction S-(5-deoxy-D-ribos-5-yl)-L-homocysteine = (S)-4,5-dihydroxypentane-2,3-dione + L-homocysteine. Involved in the synthesis of autoinducer 2 (AI-2) which is secreted by bacteria and is used to communicate both the cell density and the metabolic potential of the environment. The regulation of gene expression in response to changes in cell density is called quorum sensing. Catalyzes the transformation of S-ribosylhomocysteine (RHC) to homocysteine (HC) and 4,5-dihydroxy-2,3-pentadione (DPD). In Vibrio atlanticus (strain LGP32) (Vibrio splendidus (strain Mel32)), this protein is S-ribosylhomocysteine lyase.